We begin with the raw amino-acid sequence, 298 residues long: MRGLDYRWIEALDSVVSKGSFERAAEQLFISQSAVSQRIKQLEKYLAQPVLIREQPPRPTLVGKKLLGLYRRVCLIEQELVPELTNQEHVRPVSMSIATNADSLATWLLPALDKVMKSRQVELNLVIYGESRTLDKLKNGEVVGAISLEPQPITGCSAEYLGQMEYLCVASPEFYQKYFAKGVTPRSLIKAPAVSYDQYDELHNKFLWDYFAVPRDKVINHTVGSSEAFVRLALSGAAYCLIPRLQIISELESGALINMTPDFMLSYPIFWHHWQLETGVLLEISEAITAYAKSVLPQ.

The region spanning 4–60 (LDYRWIEALDSVVSKGSFERAAEQLFISQSAVSQRIKQLEKYLAQPVLIREQPPRPT) is the HTH lysR-type domain. Positions 21–40 (FERAAEQLFISQSAVSQRIK) form a DNA-binding region, H-T-H motif.

This sequence belongs to the LysR transcriptional regulatory family. As to quaternary structure, homodimer.

Its function is as follows. Controls the transcription of genes involved in arginine and lysine metabolism. The chain is HTH-type transcriptional regulator ArgP from Vibrio cholerae serotype O1 (strain ATCC 39315 / El Tor Inaba N16961).